The primary structure comprises 169 residues: uncharacterized protein (169 aa).

Residues 18–130 (VVEHCLAVSE…VAHADNLIFG (113 aa)) form the HD domain.

This is an uncharacterized protein from Methanocaldococcus jannaschii (strain ATCC 43067 / DSM 2661 / JAL-1 / JCM 10045 / NBRC 100440) (Methanococcus jannaschii).